The primary structure comprises 198 residues: Holliday junction resolvase RecU (198 aa).

Residues 1-22 are disordered; the sequence is MVNYPHKVSSQKRQTSLSQPKN. Residues 11-22 are compositionally biased toward polar residues; sequence QKRQTSLSQPKN. Positions 81, 83, 96, and 115 each coordinate Mg(2+).

It belongs to the RecU family. Mg(2+) serves as cofactor.

The protein resides in the cytoplasm. The enzyme catalyses Endonucleolytic cleavage at a junction such as a reciprocal single-stranded crossover between two homologous DNA duplexes (Holliday junction).. Its function is as follows. Endonuclease that resolves Holliday junction intermediates in genetic recombination. Cleaves mobile four-strand junctions by introducing symmetrical nicks in paired strands. Promotes annealing of linear ssDNA with homologous dsDNA. Required for DNA repair, homologous recombination and chromosome segregation. The polypeptide is Holliday junction resolvase RecU (Streptococcus pneumoniae serotype 2 (strain D39 / NCTC 7466)).